The sequence spans 286 residues: MSATDLASLEKTIEAAFDNRDNVNTSTKGEVRDAVEAALDLLDAGKVRVATRGADGAWTVNQWLKKAVLLSFRLNDMDVVKGGSGNSTWWDKVPSKFEGWGENHFRAAGFRAVPNCVVRRSAYIAPNAILMPSFVNLGAYVGEGTMVDTWATVGSCAQIGKHVHLSGGVGIGGVLEPMQAGPTIIEDNCFIGARSEVVEGCIVREGSVLGMGVFIGKSTKIVDRATGEVSYGEVPPYSVVVAGSMPSGNATMGNGKPAPHLYCAVIVKRVDEQTRSKTGINELLRD.

The protein belongs to the transferase hexapeptide repeat family.

Its subcellular location is the cytoplasm. It catalyses the reaction (S)-2,3,4,5-tetrahydrodipicolinate + succinyl-CoA + H2O = (S)-2-succinylamino-6-oxoheptanedioate + CoA. It functions in the pathway amino-acid biosynthesis; L-lysine biosynthesis via DAP pathway; LL-2,6-diaminopimelate from (S)-tetrahydrodipicolinate (succinylase route): step 1/3. The sequence is that of 2,3,4,5-tetrahydropyridine-2,6-dicarboxylate N-succinyltransferase from Rhizobium leguminosarum bv. trifolii (strain WSM2304).